The sequence spans 134 residues: HHFFTGNGIGLNRFSNPISSPQTQTQTRSLPFPAIKAMKTMEGKVVCASGNKTVAVEVTRLAPHPKYQKRIRLKKKYQAHDPENDFKVGDIVQLLKTRPISKKKTFLAVPAPSRKSKKAGSSGELGIPLQSQQE.

Residues 1–37 (HHFFTGNGIGLNRFSNPISSPQTQTQTRSLPFPAIKA) constitute a chloroplast transit peptide. A disordered region spans residues 106-134 (FLAVPAPSRKSKKAGSSGELGIPLQSQQE).

This sequence belongs to the universal ribosomal protein uS17 family. In terms of assembly, part of the 30S ribosomal subunit.

It is found in the plastid. The protein localises to the chloroplast. Its function is as follows. One of the primary rRNA binding proteins, it binds specifically to the 5'-end of 16S ribosomal RNA. The chain is Small ribosomal subunit protein uS17c (RPS17) from Pisum sativum (Garden pea).